The sequence spans 330 residues: MGKIDVDKILFFNQEIRLWQLIMATPEENSNPHDRATPQLPAQLQELEHRVARRRLSQARHRATLAALFNNLRKTVYSQSDLIASKWQVLNKAKSHIPELEQTLDNLLKLKASFNLEDGHASSLEEVKKEYASMYSGNDSFPQNGSSPWYLNFYKQTMDLLTGSGIITPQEAALPIVSAAISHLWQNLSEERKASLRQAWAQKHRGPATLAEACREPACAEGSVKDSGVDSQGASCSLVSTPEEILFEDAFDVASFLDKSEVPSTSSSSSVLASCNPENPEEKFQLYMQIINFFKGLSCANTQVKQEASFPVDEEMIMLQCTETFDDEDL.

Residues 50-55 (RVARRR) carry the Nuclear localization signal (NLS) motif. Residues 88-112 (QVLNKAKSHIPELEQTLDNLLKLKA) adopt a coiled-coil conformation.

In terms of assembly, interacts with XPO1. Interacts with MEIOSIN. In terms of processing, phosphorylated. In terms of tissue distribution, expressed specifically in testis and fetal ovaries.

The protein resides in the cytoplasm. It is found in the nucleus. Functionally, meiosis-inducer required for the transition into meiosis for both female and male germ cells. In female germ cells, acts downstream of ZGLP1 as a key effector of the meiotic program: required for premeiotic DNA replication and subsequent events in meiotic prophase. During spermatogenesis, next to its role in meiotic initiation, promotes (but is not required for) spermatogonial differentiation. In complex with MEIOSIN, directly activates the transcription of a subset of critical meiotic genes playing a central role in cell-cycle switching from mitosis to meiosis. The chain is Stimulated by retinoic acid gene 8 protein homolog from Homo sapiens (Human).